Here is a 133-residue protein sequence, read N- to C-terminus: Serine/threonine-protein kinase RsbT (133 aa).

The enzyme catalyses L-seryl-[protein] + ATP = O-phospho-L-seryl-[protein] + ADP + H(+). It catalyses the reaction L-threonyl-[protein] + ATP = O-phospho-L-threonyl-[protein] + ADP + H(+). Provides the crucial link between the upstream module (communication of environmental stress) and the downstream module (integration of the environmental signals with signals of energy stress) that compose the signal transduction pathway controlling the sigma-B factor. Phosphorylates and inactivates its specific antagonist protein RsbS thanks to its serine kinase activity. Upon phosphorylation of RsbS, RsbT is released to stimulate RsbU, a PP2C phosphatase, thereby initiating the signaling cascade that ultimately activates sigma-B. The activity of the RsbU phosphatase may be stimulated by a long-lived interaction with RsbT and the serine kinase function of RsbT is not required to directly modify RsbU. Also phosphorylates RsbR thanks to its threonine kinase activity, preventing it to phosphorylate RsbT. In Bacillus subtilis (strain 168), this protein is Serine/threonine-protein kinase RsbT (rsbT).